We begin with the raw amino-acid sequence, 616 residues long: Protein NRT1/ PTR FAMILY 2.11 (616 aa).

A disordered region spans residues 1-22; sequence MERKPLELESTDNHQNPSSAVY. Helical transmembrane passes span 59-79, 87-107, 118-138, 159-179, 205-225, 233-253, 349-369, 392-412, 435-455, 483-503, 519-539, and 566-586; these read FEKL…TAVF, ATII…AAFL, LSVA…TAAV, GGQI…AGGI, FFNW…TLVV, WTIG…IFFA, VKCI…YLTI, FVIP…VFIV, LQRI…AGFV, AMWL…AAIG, FAGS…SFLI, and LFYF…LVMS.

It belongs to the major facilitator superfamily. Proton-dependent oligopeptide transporter (POT/PTR) (TC 2.A.17) family. Expressed in roots. Detected in shoots, stems and flowers. Expressed in veins and in the root vasculature with highest expression in lateral branching points.

The protein localises to the cell membrane. In terms of biological role, high-affinity, proton-dependent glucosinolate-specific transporter. Involved in apoplasmic phloem-loading of glucosinolates and in bidirectional long-distance transport of aliphatic but not indole glucosinolates. May be involved in removal of glucosinolates from the xylem in roots. The polypeptide is Protein NRT1/ PTR FAMILY 2.11 (NPF2.11) (Arabidopsis thaliana (Mouse-ear cress)).